A 265-amino-acid polypeptide reads, in one-letter code: Small ribosomal subunit protein uS2 (265 aa).

Belongs to the universal ribosomal protein uS2 family.

This Gluconobacter oxydans (strain 621H) (Gluconobacter suboxydans) protein is Small ribosomal subunit protein uS2.